A 345-amino-acid chain; its full sequence is Phosphate acyltransferase (345 aa).

It belongs to the PlsX family. As to quaternary structure, homodimer. Probably interacts with PlsY.

The protein resides in the cytoplasm. The enzyme catalyses a fatty acyl-[ACP] + phosphate = an acyl phosphate + holo-[ACP]. The protein operates within lipid metabolism; phospholipid metabolism. Its function is as follows. Catalyzes the reversible formation of acyl-phosphate (acyl-PO(4)) from acyl-[acyl-carrier-protein] (acyl-ACP). This enzyme utilizes acyl-ACP as fatty acyl donor, but not acyl-CoA. The polypeptide is Phosphate acyltransferase (Photorhabdus laumondii subsp. laumondii (strain DSM 15139 / CIP 105565 / TT01) (Photorhabdus luminescens subsp. laumondii)).